The sequence spans 408 residues: CinA-like protein (408 aa).

This sequence belongs to the CinA family.

This chain is CinA-like protein, found in Anaeromyxobacter dehalogenans (strain 2CP-C).